The following is a 430-amino-acid chain: Enolase (430 aa).

Position 167 (glutamine 167) interacts with (2R)-2-phosphoglycerate. Residue glutamate 209 is the Proton donor of the active site. Residues aspartate 245, glutamate 286, and aspartate 313 each contribute to the Mg(2+) site. Residues lysine 338, arginine 367, serine 368, and lysine 389 each coordinate (2R)-2-phosphoglycerate. Residue lysine 338 is the Proton acceptor of the active site.

It belongs to the enolase family. Mg(2+) serves as cofactor.

It is found in the cytoplasm. Its subcellular location is the secreted. It localises to the cell surface. The catalysed reaction is (2R)-2-phosphoglycerate = phosphoenolpyruvate + H2O. Its pathway is carbohydrate degradation; glycolysis; pyruvate from D-glyceraldehyde 3-phosphate: step 4/5. Its function is as follows. Catalyzes the reversible conversion of 2-phosphoglycerate (2-PG) into phosphoenolpyruvate (PEP). It is essential for the degradation of carbohydrates via glycolysis. The sequence is that of Enolase from Synechococcus sp. (strain WH7803).